An 82-amino-acid polypeptide reads, in one-letter code: Cytochrome b559 subunit alpha (82 aa).

The chain crosses the membrane as a helical span at residues 22-36; the sequence is IIHAVTLPAIFIAGF. A heme-binding site is contributed by His-24.

It belongs to the PsbE/PsbF family. As to quaternary structure, heterodimer of an alpha subunit and a beta subunit. PSII is composed of 1 copy each of membrane proteins PsbA, PsbB, PsbC, PsbD, PsbE, PsbF, PsbH, PsbI, PsbJ, PsbK, PsbL, PsbM, PsbT, PsbX, PsbY, Psb30/Ycf12, peripheral proteins PsbO, CyanoQ (PsbQ), PsbU, PsbV and a large number of cofactors. It forms dimeric complexes. Heme b serves as cofactor.

Its subcellular location is the cellular thylakoid membrane. This b-type cytochrome is tightly associated with the reaction center of photosystem II (PSII). PSII is a light-driven water:plastoquinone oxidoreductase that uses light energy to abstract electrons from H(2)O, generating O(2) and a proton gradient subsequently used for ATP formation. It consists of a core antenna complex that captures photons, and an electron transfer chain that converts photonic excitation into a charge separation. This is Cytochrome b559 subunit alpha from Prochlorococcus marinus (strain SARG / CCMP1375 / SS120).